The following is a 191-amino-acid chain: Divergent paired-related homeobox (191 aa).

Over residues 1–15 (MPGSEDLRKGKDQMH) the composition is skewed to basic and acidic residues. Positions 1–20 (MPGSEDLRKGKDQMHSHRKR) are disordered. A DNA-binding region (homeobox) is located at residues 16–75 (SHRKRTMFTKKQLEDLNILFNENPYPNPSLQKEMASKIDIHPTVLQVWFKNHRAKLKKAK).

This sequence belongs to the paired homeobox family.

Its subcellular location is the nucleus. In terms of biological role, transcription factor that acts as a repressor. This Homo sapiens (Human) protein is Divergent paired-related homeobox.